A 312-amino-acid polypeptide reads, in one-letter code: Protease HtpX homolog (312 aa).

Helical transmembrane passes span 6–26 (TAVL…AIGG) and 28–48 (GGMM…YWYA). Histidine 130 contacts Zn(2+). The active site involves glutamate 131. A Zn(2+)-binding site is contributed by histidine 134. 2 consecutive transmembrane segments (helical) span residues 145–165 (ITAS…FFGG) and 173–193 (PFGG…AMVV). Glutamate 202 contacts Zn(2+). Positions 287–297 (PAPARAAPARG) are enriched in low complexity. Positions 287 to 312 (PAPARAAPARGPWGGNTGGTRRGPWG) are disordered. Gly residues predominate over residues 298–312 (PWGGNTGGTRRGPWG).

The protein belongs to the peptidase M48B family. The cofactor is Zn(2+).

The protein resides in the cell inner membrane. This chain is Protease HtpX homolog, found in Azorhizobium caulinodans (strain ATCC 43989 / DSM 5975 / JCM 20966 / LMG 6465 / NBRC 14845 / NCIMB 13405 / ORS 571).